The primary structure comprises 369 residues: GTPase Obg (369 aa).

Residues 1 to 159 form the Obg domain; sequence MKFIDEAKIE…RELRLELKVL (159 aa). The interval 128–148 is disordered; that stretch reads IHFKSSTNRAPRQKSEGKEGE. The OBG-type G domain maps to 160 to 333; sequence ADIGLLGMPN…LVTEIYEYIA (174 aa). Residues 166-173, 191-195, 213-216, 283-286, and 314-316 contribute to the GTP site; these read GMPNAGKS, FTTLH, DIPG, NKLD, and SAL. The Mg(2+) site is built by serine 173 and threonine 193.

The protein belongs to the TRAFAC class OBG-HflX-like GTPase superfamily. OBG GTPase family. As to quaternary structure, monomer. The cofactor is Mg(2+).

The protein localises to the cytoplasm. Its function is as follows. An essential GTPase which binds GTP, GDP and possibly (p)ppGpp with moderate affinity, with high nucleotide exchange rates and a fairly low GTP hydrolysis rate. Plays a role in control of the cell cycle, stress response, ribosome biogenesis and in those bacteria that undergo differentiation, in morphogenesis control. This Janthinobacterium sp. (strain Marseille) (Minibacterium massiliensis) protein is GTPase Obg.